The sequence spans 88 residues: Small ribosomal subunit protein bS20 (88 aa).

The interval Met1–Ser26 is disordered. Residues Ala7 to Gln19 are compositionally biased toward basic residues.

It belongs to the bacterial ribosomal protein bS20 family.

Functionally, binds directly to 16S ribosomal RNA. This is Small ribosomal subunit protein bS20 from Psychrobacter arcticus (strain DSM 17307 / VKM B-2377 / 273-4).